The following is a 122-amino-acid chain: Large ribosomal subunit protein uL14c (122 aa).

This sequence belongs to the universal ribosomal protein uL14 family. In terms of assembly, part of the 50S ribosomal subunit.

It is found in the plastid. Its subcellular location is the cyanelle. Functionally, binds to 23S rRNA. The protein is Large ribosomal subunit protein uL14c of Cyanophora paradoxa.